The primary structure comprises 545 residues: Glucose-6-phosphate isomerase (545 aa).

Glu-351 serves as the catalytic Proton donor. Residues His-382 and Lys-510 contribute to the active site.

This sequence belongs to the GPI family.

It localises to the cytoplasm. It catalyses the reaction alpha-D-glucose 6-phosphate = beta-D-fructose 6-phosphate. It participates in carbohydrate biosynthesis; gluconeogenesis. The protein operates within carbohydrate degradation; glycolysis; D-glyceraldehyde 3-phosphate and glycerone phosphate from D-glucose: step 2/4. Its function is as follows. Catalyzes the reversible isomerization of glucose-6-phosphate to fructose-6-phosphate. This Shewanella amazonensis (strain ATCC BAA-1098 / SB2B) protein is Glucose-6-phosphate isomerase.